The primary structure comprises 178 residues: Ribose 1,5-bisphosphate phosphokinase PhnN (178 aa).

Residue 9 to 16 (GPSGSGKD) participates in ATP binding.

Belongs to the ribose 1,5-bisphosphokinase family.

It carries out the reaction alpha-D-ribose 1,5-bisphosphate + ATP = 5-phospho-alpha-D-ribose 1-diphosphate + ADP. Its pathway is metabolic intermediate biosynthesis; 5-phospho-alpha-D-ribose 1-diphosphate biosynthesis; 5-phospho-alpha-D-ribose 1-diphosphate from D-ribose 5-phosphate (route II): step 3/3. Its function is as follows. Catalyzes the phosphorylation of ribose 1,5-bisphosphate to 5-phospho-D-ribosyl alpha-1-diphosphate (PRPP). The protein is Ribose 1,5-bisphosphate phosphokinase PhnN of Pantoea vagans (strain C9-1) (Pantoea agglomerans (strain C9-1)).